Consider the following 426-residue polypeptide: Dynein regulatory complex protein 10 (426 aa).

Disordered stretches follow at residues 18–37 and 399–426; these read TRIGPKTDPSKRPADPLKPL and SKKKRGKGKAKGKEKGKQKGKEKGKGKK. One can recognise an IQ domain in the interval 377 to 406; it reads MVRAATLIQAFWKGYLVRSLLRSKKKRGKG. Basic residues predominate over residues 399-408; that stretch reads SKKKRGKGKA. A compositionally biased stretch (basic and acidic residues) spans 409-426; the sequence is KGKEKGKQKGKEKGKGKK.

This sequence belongs to the DRC10 family. In terms of assembly, component of the nexin-dynein regulatory complex (N-DRC). Interacts with CFAP52.

Its subcellular location is the cytoplasm. The protein localises to the cytoskeleton. The protein resides in the flagellum axoneme. In terms of biological role, component of the nexin-dynein regulatory complex (N-DRC), a key regulator of ciliary/flagellar motility which maintains the alignment and integrity of the distal axoneme and regulates microtubule sliding in motile axonemes. The polypeptide is Dynein regulatory complex protein 10 (IQCD) (Macaca fascicularis (Crab-eating macaque)).